We begin with the raw amino-acid sequence, 447 residues long: Teichoic acids export ATP-binding protein TagH (447 aa).

Residues 24–246 (DKLKTLFSVF…YRAFLHRYNH (223 aa)) form the ABC transporter domain. ATP is bound at residue 60–67 (GLNGSGKS). The tract at residues 247–447 (FTEPQKESYQ…QVLKLKEVTE (201 aa)) is unknown. A disordered region spans residues 359 to 393 (NAVKTTKTKPASTKESRQQEEVQPSPTNVPENNNS). Composition is skewed to polar residues over residues 360 to 369 (AVKTTKTKPA) and 379 to 393 (EVQPSPTNVPENNNS). The region spanning 398–442 (STYTVEVGDSVSLIAENHGLTIEQLQTLNPEIIEVPIYPGQVLKL) is the LysM domain.

Belongs to the ABC transporter superfamily. Teichoic acids exporter (TC 3.A.1.104.1) family. The complex is composed of two ATP-binding proteins (TagH) and two transmembrane proteins (TagG).

The protein localises to the cell membrane. The enzyme catalyses ATP + H2O + teichoic acidSide 1 = ADP + phosphate + teichoic acidSide 2.. Functionally, part of the ABC transporter complex TagGH involved in teichoic acids export. Responsible for energy coupling to the transport system. This is Teichoic acids export ATP-binding protein TagH from Enterococcus faecalis (strain ATCC 700802 / V583).